The sequence spans 310 residues: Inorganic pyrophosphatase, mitochondrial (310 aa).

The N-terminal 30 residues, 1–30 (MNLLRMNALTSKARSIERLKQTLNILSIRN), are a transit peptide targeting the mitochondrion. Mg(2+) contacts are provided by aspartate 152, aspartate 157, and aspartate 189.

It belongs to the PPase family. Homodimer that binds non-covalently to a protein complex in the inner mitochondrial membrane. Mg(2+) serves as cofactor.

It localises to the mitochondrion. The enzyme catalyses diphosphate + H2O = 2 phosphate + H(+). Functionally, involved in energy production. Its activity is stimulated by uncouplers of ATP synthesis. This chain is Inorganic pyrophosphatase, mitochondrial (PPA2), found in Saccharomyces cerevisiae (strain ATCC 204508 / S288c) (Baker's yeast).